Here is a 346-residue protein sequence, read N- to C-terminus: Methylthioribose-1-phosphate isomerase (346 aa).

Substrate is bound by residues 46 to 48 (RGA), R89, and Q196. The Proton donor role is filled by D237. 247-248 (NK) serves as a coordination point for substrate.

The protein belongs to the eIF-2B alpha/beta/delta subunits family. MtnA subfamily.

It catalyses the reaction 5-(methylsulfanyl)-alpha-D-ribose 1-phosphate = 5-(methylsulfanyl)-D-ribulose 1-phosphate. Its pathway is amino-acid biosynthesis; L-methionine biosynthesis via salvage pathway; L-methionine from S-methyl-5-thio-alpha-D-ribose 1-phosphate: step 1/6. In terms of biological role, catalyzes the interconversion of methylthioribose-1-phosphate (MTR-1-P) into methylthioribulose-1-phosphate (MTRu-1-P). The sequence is that of Methylthioribose-1-phosphate isomerase from Geotalea uraniireducens (strain Rf4) (Geobacter uraniireducens).